Here is an 819-residue protein sequence, read N- to C-terminus: Zinc finger protein 27 (819 aa).

The region spanning 1–75 is the KRAB domain; that stretch reads MDVTIDFSRE…KTLGAESCHD (75 aa). The segment at 93-123 is disordered; it reads PKRPRHWDPPEDEPKHSSDLQTHDESNGLKR. Positions 98 to 120 are enriched in basic and acidic residues; sequence HWDPPEDEPKHSSDLQTHDESNG. 21 consecutive C2H2-type zinc fingers follow at residues 205 to 227, 233 to 255, 261 to 283, 289 to 311, 317 to 339, 345 to 367, 401 to 423, 429 to 451, 457 to 479, 485 to 507, 513 to 535, 541 to 563, 569 to 591, 597 to 619, 625 to 647, 653 to 675, 681 to 703, 709 to 731, 737 to 759, 765 to 787, and 793 to 815; these read YVCVECGKACSQTSEFLTHQKTH, YKCGDCGKSFFQVSSLFRHRRIH, YDCSHCGKGFSYNSDLRIHQKIH, HGCVDCGKAFTQKSTLRMHQKIH, YVCIECGQAFIQKTHLVAHRRIH, YACDGCGKAFLSKSQLLVHQRIH, SICAECGKAFTYRSELIIHQRTH, YQCGDCGKAFTQKSALTVHRRIH, YVCVKCGLAFVQRAHLDAHQVIH, YQCGHCGKFFTSKSQLHVHKRIH, YVCSNCGKAFANRSNLITHQKTH, YVCARCGKAFTQRSDLVTHQRIH, YGCSTCGKAFTQKSHLSIHEKIH, YGCRDCGKAFNQKSILIVHQKIH, HVCAECGRAFIRKSNFITHQRIH, YGCTDCGKSFTSKSQLLVHRPIH, YVCAECGKAFSGRSNLSKHQKTH, YACSECGKSFRQKSELITHHRIH, YDCGDCGKSFTKKSQLQVHQRIH, YRCAECGKAFTDRSNLNKHQTTH, and YKCVVCGKGFVQKSVLSIHENVH.

The protein belongs to the krueppel C2H2-type zinc-finger protein family.

The protein localises to the nucleus. Functionally, may be involved in transcriptional regulation. This Mus musculus (Mouse) protein is Zinc finger protein 27 (Zfp27).